Consider the following 216-residue polypeptide: Endoplasmic reticulum vesicle protein 25 (216 aa).

The N-terminal stretch at 1-20 (MASLKSLLSGFLLLAGAAQA) is a signal peptide. Over 21-185 (LKFDLEATSS…TNESTNNRVK (165 aa)) the chain is Lumenal. The GOLD domain occupies 36-126 (RRCIRNFVNK…RRHVELDIDI (91 aa)). Residues 186 to 206 (WFGMATTFLLIALWGWQIMYL) traverse the membrane as a helical segment. Topologically, residues 207 to 216 (RAYFRSKHLI) are cytoplasmic.

The protein belongs to the EMP24/GP25L family.

The protein resides in the endoplasmic reticulum membrane. It localises to the golgi apparatus membrane. In terms of biological role, constituent of COPII-coated endoplasmic reticulum-derived transport vesicles. Required for efficient transport of a subset of secretory proteins to the Golgi. Facilitates retrograde transport from the Golgi to the endoplasmic reticulum. This is Endoplasmic reticulum vesicle protein 25 (erv-1) from Neurospora crassa (strain ATCC 24698 / 74-OR23-1A / CBS 708.71 / DSM 1257 / FGSC 987).